We begin with the raw amino-acid sequence, 93 residues long: Protein NONRESPONDING TO OXYLIPINS 2, mitochondrial (93 aa).

A mitochondrion-targeting transit peptide spans 1–27 (MASRCRSLSKPAFSAFRSAMNKPSIRP).

As to expression, expressed in cotyledons, roots and flowers.

Its subcellular location is the mitochondrion. Essential for mitochondrial morphology, functionality and distribution. Contributes to 9-lipoxygenase (9-LOX)-derived oxylipin synthesis, but not to brassinosteroids (BRs) signaling. Required for waving-inducing oxylipin 9-hydroxyoctadecatrienoic acid and derivatives (e.g. 9-HOT, 2-HOE, 13-HOT, 13-HOD, 13-KOD, 12,13-KHOD, 9-HOT, 9-HOD, 9-KOT, 9-KOD and 9,10-KHOE)-mediated root development regulation, including callose deposition, root waving and lateral roots formation. Involved in basal plant defense toward pathogenic bacteria (e.g. Pseudomonas syringae pv tomato), both in compatible (e.g. Pst DC3000) and incompatible (e.g. Pst DC3000 avrRPM1) interactions, as well as against obligate biotrophic pathogenic fungi (e.g. Golovinomyces cichoracearum), probably via the promotion of callose deposition in the cell wall. Confers sensitivity to the herbicide isoxaben, a herbicide inhibiting cellulose synthesis and altering the cell wall. The chain is Protein NONRESPONDING TO OXYLIPINS 2, mitochondrial from Arabidopsis thaliana (Mouse-ear cress).